The following is a 428-amino-acid chain: Small ribosomal subunit protein uS2m (428 aa).

Positions 30–50 are disordered; that stretch reads FLSQDNFTAPPPPPTNSKKQA.

It belongs to the universal ribosomal protein uS2 family. In terms of assembly, component of the mitochondrial small ribosomal subunit (mt-SSU). Mature N.crassa 74S mitochondrial ribosomes consist of a small (37S) and a large (54S) subunit. The 37S small subunit contains a 16S ribosomal RNA (16S mt-rRNA) and 32 different proteins. The 54S large subunit contains a 23S rRNA (23S mt-rRNA) and 42 different proteins.

It localises to the mitochondrion. Its function is as follows. Component of the mitochondrial ribosome (mitoribosome), a dedicated translation machinery responsible for the synthesis of mitochondrial genome-encoded proteins, including at least some of the essential transmembrane subunits of the mitochondrial respiratory chain. The mitoribosomes are attached to the mitochondrial inner membrane and translation products are cotranslationally integrated into the membrane. This chain is Small ribosomal subunit protein uS2m (mrp4), found in Neurospora crassa (strain ATCC 24698 / 74-OR23-1A / CBS 708.71 / DSM 1257 / FGSC 987).